The sequence spans 198 residues: Recombination protein RecR (198 aa).

The C4-type zinc-finger motif lies at 57-72; that stretch reads CQRCNTFSEAELCAIC. Positions 80-175 constitute a Toprim domain; that stretch reads DQLCIVEMPA…TVTRIARGMP (96 aa).

It belongs to the RecR family.

Functionally, may play a role in DNA repair. It seems to be involved in an RecBC-independent recombinational process of DNA repair. It may act with RecF and RecO. This is Recombination protein RecR from Chromobacterium violaceum (strain ATCC 12472 / DSM 30191 / JCM 1249 / CCUG 213 / NBRC 12614 / NCIMB 9131 / NCTC 9757 / MK).